The sequence spans 157 residues: Snaclec 3 (157 aa).

Positions 1–23 (MGRLIFLSFGWLVVFLSLSGTGA) are cleaved as a signal peptide. 3 disulfides stabilise this stretch: Cys27–Cys38, Cys55–Cys153, and Cys128–Cys145. One can recognise a C-type lectin domain in the interval 34–154 (YGQHCYRAFS…CAGHYPFICK (121 aa)).

The protein belongs to the snaclec family. In terms of assembly, heterodimer; disulfide-linked. As to expression, expressed by the venom gland.

Its subcellular location is the secreted. Its function is as follows. Interferes with one step of hemostasis (modulation of platelet aggregation, or coagulation cascade, for example). The sequence is that of Snaclec 3 from Bitis gabonica (Gaboon adder).